The following is a 271-amino-acid chain: Mediator of RNA polymerase II transcription subunit 18 (271 aa).

The interval 89-119 (FGGNPSSSGDPDVSMSGLEEKPSSSSSSYSY) is disordered.

Belongs to the Mediator complex subunit 18 family. In terms of assembly, component of the Mediator complex.

Its subcellular location is the nucleus. Functionally, component of the Mediator complex, a coactivator involved in the regulated transcription of nearly all RNA polymerase II-dependent genes. Mediator functions as a bridge to convey information from gene-specific regulatory proteins to the basal RNA polymerase II transcription machinery. Mediator is recruited to promoters by direct interactions with regulatory proteins and serves as a scaffold for the assembly of a functional preinitiation complex with RNA polymerase II and the general transcription factors. The chain is Mediator of RNA polymerase II transcription subunit 18 (srb5) from Aspergillus niger (strain ATCC MYA-4892 / CBS 513.88 / FGSC A1513).